A 203-amino-acid chain; its full sequence is Proteasome subunit beta 2 (203 aa).

A propeptide spans 1–10 (MNLQNKILKG) (removed in mature form; by autocatalysis). Threonine 11 functions as the Nucleophile in the catalytic mechanism.

This sequence belongs to the peptidase T1B family. In terms of assembly, the 20S proteasome core is composed of 14 alpha and 14 beta subunits that assemble into four stacked heptameric rings, resulting in a barrel-shaped structure. The two inner rings, each composed of seven catalytic beta subunits, are sandwiched by two outer rings, each composed of seven alpha subunits. The catalytic chamber with the active sites is on the inside of the barrel. Has a gated structure, the ends of the cylinder being occluded by the N-termini of the alpha-subunits. Is capped at one or both ends by the proteasome regulatory ATPase, PAN.

Its subcellular location is the cytoplasm. It carries out the reaction Cleavage of peptide bonds with very broad specificity.. Its activity is regulated as follows. The formation of the proteasomal ATPase PAN-20S proteasome complex, via the docking of the C-termini of PAN into the intersubunit pockets in the alpha-rings, triggers opening of the gate for substrate entry. Interconversion between the open-gate and close-gate conformations leads to a dynamic regulation of the 20S proteasome proteolysis activity. In terms of biological role, component of the proteasome core, a large protease complex with broad specificity involved in protein degradation. This is Proteasome subunit beta 2 from Sulfolobus acidocaldarius (strain ATCC 33909 / DSM 639 / JCM 8929 / NBRC 15157 / NCIMB 11770).